We begin with the raw amino-acid sequence, 477 residues long: Tripartite motif-containing protein 72 (477 aa).

Residues C14, C17, C29, H31, C34, C37, C53, C56, C86, H89, C97, D100, C105, C108, H114, and H117 each coordinate Zn(2+). Residues 14 to 57 form an RING-type zinc finger; that stretch reads CPLCLQLFDAPVTAECGHSFCRACLSRVAGEPAADGTVNCPCCQ. A B box-type zinc finger spans residues 81–122; that stretch reads VPQGHCEEHLDPLSIYCEQDRVLVCGVCASLGSHRGHRLLPA. Positions 135–232 form a coiled coil; the sequence is QQKLQLQEAS…EKVLEEVADK (98 aa). At S255 the chain carries Phosphoserine. Residues 271–475 enclose the B30.2/SPRY domain; the sequence is DFKFQVWRKM…PLLLVGPDGQ (205 aa).

It belongs to the TRIM/RBCC family. Homodimer. Homooligomer; disulfide-linked. Oligomerizes on the phospholipid membrane. Interacts with DYSF and CAV3. Post-translationally, disulfide bond formation at Cys-242 occurs in case of membrane damage that cause the entry of the oxidized milieu of the extracellular space, resulting in homooligomerization. As to expression, muscle-specific.

It is found in the cell membrane. It localises to the sarcolemma. Its subcellular location is the cytoplasmic vesicle membrane. The enzyme catalyses S-ubiquitinyl-[E2 ubiquitin-conjugating enzyme]-L-cysteine + [acceptor protein]-L-lysine = [E2 ubiquitin-conjugating enzyme]-L-cysteine + N(6)-ubiquitinyl-[acceptor protein]-L-lysine.. The protein operates within protein modification; protein ubiquitination. Specifically binds phosphatidylserine. The binding to phospholipids enhances ubiquitination activity. Functionally, muscle-specific E3 ubiquitin-protein ligase that plays a central role in cell membrane repair by nucleating the assembly of the repair machinery at injury sites. Its ubiquitination activity is mediated by E2 ubiquitin-conjugating enzymes UBE2D1, UBE2D2 and UBE2D3. Acts as a sensor of oxidation: upon membrane damage, entry of extracellular oxidative environment results in disulfide bond formation and homooligomerization at the injury site. This oligomerization acts as a nucleation site for recruitment of TRIM72-containing vesicles to the injury site, leading to membrane patch formation. Probably acts upstream of the Ca(2+)-dependent membrane resealing process. Required for transport of DYSF to sites of cell injury during repair patch formation. Regulates membrane budding and exocytosis. May be involved in the regulation of the mobility of KCNB1-containing endocytic vesicles. The protein is Tripartite motif-containing protein 72 of Oryctolagus cuniculus (Rabbit).